Reading from the N-terminus, the 163-residue chain is Mediator of RNA polymerase II transcription subunit 10 (163 aa).

The interval 57–79 (AAPDPSYVQSPPSRTGLSPADPP) is disordered. The segment covering 63–72 (YVQSPPSRTG) has biased composition (polar residues).

This sequence belongs to the Mediator complex subunit 10 family. Component of the Mediator complex.

It localises to the nucleus. Functionally, component of the Mediator complex, a coactivator involved in the regulated transcription of nearly all RNA polymerase II-dependent genes. Mediator functions as a bridge to convey information from gene-specific regulatory proteins to the basal RNA polymerase II transcription machinery. Mediator is recruited to promoters by direct interactions with regulatory proteins and serves as a scaffold for the assembly of a functional preinitiation complex with RNA polymerase II and the general transcription factors. The sequence is that of Mediator of RNA polymerase II transcription subunit 10 (NUT2) from Coccidioides immitis (strain RS) (Valley fever fungus).